The chain runs to 394 residues: uncharacterized protein (394 aa).

Helical transmembrane passes span 13-33 (LITT…TTMI), 35-55 (MAPT…VLPT), 73-95 (TTMT…TLTV), 110-130 (ALTV…HMVL), 152-172 (IHMV…PTVL), 179-198 (LMVL…TLTV), 216-236 (VLLA…TVLP), 241-261 (VLMV…HMVL), 267-287 (VLMV…PTVL), 293-313 (VLMV…TLTV), 340-360 (MMTL…VTTI), and 372-392 (ILLC…YVSA).

The protein localises to the membrane. This is an uncharacterized protein from Saccharomyces cerevisiae (strain ATCC 204508 / S288c) (Baker's yeast).